The following is an 879-amino-acid chain: MLLRLLLLLAPCGAGFATKVVSISLRGNWKIHSGNGSLQLPATVPGCVHSALFNKRIIKDPYYRFNNLDYRWIALDNWTYIKKFKLHSDMSTWSKVNLVFEGIDTVAVVLLNSVPIGKTDNMFRRYSFDITHTVKAVNIIEVRFQSPVVYANQRSERHTAYWVPPNCPPPVQDGECHVNFIRKMQCSFGWDWGPSFPTQGIWKDVRIEAYNVCHLNYFMFTPIYDNYMKTWNLKIESSFDVVSSKLVSGEAIVAIPELNIQQTNNIELQHGERTVELFVKIDKAIIVETWWPHGHGNQTGYNMSVIFELDGGLRFEKSAKVYFRTVELVEEPIQNSPGLSFYFKINGLPIFLKGSNWIPADSFQDRVTSAMLRLLLQSVVDANMNALRVWGGGVYEQDEFYELCDELGIMIWQDFMFACALYPTDKDFMDSVREEVTHQVRRLKSHPSIITWSGNNENEAALMMGWYDTKPGYLQTYIKDYVTLYVKNIRTIVLEGDQTRPFITSSPTNGAKTIAEGWLSPNPYDLNYGDVHFYDYVSDCWNWRTFPKARFVSEYGYQSWPSFSTLEKVSSEEDWSYRSSFALHRQHLINGNNEMLHQIELHFKLPNSTDQLRRFKDTLYLTQVMQAQCVKTETEFYRRSRSEIVNGKGHTMGALYWQLNDIWQAPSWSSLEYGGKWKMLHYFARHFFAPLLPVGFEDKDMLFIYGASHLHSDQQMMLTVRVHTWSSLELVCSESTNPFVIKAGESVLLYTKPVPELLKGCPGCTRQSCVVSFYLSTDGELLSPINYHFLSSLKNAKGLHKANITATISQQGDTFVFDLKTSAVAPFVWLDVGSIPGRFSDNGFLMTEKTRTVFFYPWKPTSKSELEQSFHVTSLADTY.

The N-terminal stretch at 1-17 (MLLRLLLLLAPCGAGFA) is a signal peptide. N35 and N77 each carry an N-linked (GlcNAc...) asparagine glycan. C167 and C176 form a disulfide bridge. Position 190–192 (190–192 (WDW)) interacts with substrate. N297 and N302 each carry an N-linked (GlcNAc...) asparagine glycan. Residue N456 coordinates substrate. The Proton donor role is filled by E457. Disulfide bonds link C540/C629, C732/C761, and C764/C769. E554 acts as the Nucleophile in catalysis. The N-linked (GlcNAc...) asparagine glycan is linked to N607. N803 carries N-linked (GlcNAc...) asparagine glycosylation.

It belongs to the glycosyl hydrolase 2 family. Monomer. In terms of processing, the N-terminus is blocked. N-glycosylated. In terms of tissue distribution, detected in kidney (at protein level). Highest expression is found in thyroid tissue. The amount of transcript is significantly higher in normal tissues than in tissues affected by the disease.

It localises to the lysosome. The enzyme catalyses Hydrolysis of terminal, non-reducing beta-D-mannose residues in beta-D-mannosides.. It participates in glycan metabolism; N-glycan degradation. Exoglycosidase that cleaves the single beta-linked mannose residue from the non-reducing end of all N-linked glycoprotein oligosaccharides. The polypeptide is Beta-mannosidase (MANBA) (Bos taurus (Bovine)).